The chain runs to 388 residues: Trans-enoyl reductase tenC (388 aa).

51-54 contacts NADP(+); that stretch reads VDGK. Substrate is bound at residue 142–149; that stretch reads VGVASVGM. NADP(+) contacts are provided by residues 219–222, Tyr237, and 284–285; these read SSES and LD. Substrate is bound at residue 304-308; that stretch reads SFTQF. NADP(+) is bound at residue 373–374; sequence IK.

The protein belongs to the zinc-containing alcohol dehydrogenase family. In terms of assembly, monomer.

The protein operates within secondary metabolite biosynthesis. Its function is as follows. Trans-enoyl reductase; part of the gene cluster that mediates the biosynthesis of tenellin-type 2-pyridones, iron-chelating compounds involved in iron stress tolerance, competition with the natural competitor fungus Metarhizium robertsii and insect hosts infection. TenC collaborates with the hybrid PKS-NRPS synthetase tenS to catalyze the assembly of the polyketide-amino acid backbone, since tenS lacks a designated enoylreductase (ER) domain. Upon formation of the polyketide backbone on the thiotemplate of tenS, the triketide is transferred to the NRPS module and linked to tyrosine to produce the pyrrolidine-2-dione intermediates, including pretellinin A, 11-hydropretellenin A, 12-hydropretellenin A, 13-hydropretellenin A, 14-hydropretellenin A, 12-oxopretellenin A and prototellinin D. The pathway begins with the assembly of the polyketide-amino acid backbone by the hybrid PKS-NRPS tenS with the help of the enoyl reductase tenC. These enzymes catalyze the synthesis of the pyrrolidine-2-dione intermediates pretellinin A, 11-hydropretellenin A, 12-hydropretellenin A, 13-hydropretellenin A, 14-hydropretellenin A, 12-oxopretellenin A and prototellinin D. The cytochrome P450 monooxygenase tenA then catalyzes an oxidative ring expansion of pretenellin A and 14-hydropretellenin A to form the 2-pyridone core, leading to pretenellin B and pyridovericin, respectively. The cytochrome P450 monooxygenase tenB is then required for the selective N-hydroxylation of the 2-pyridone nitrogen of yield tellinin and 15-hydroxytellenin (15-HT), respectively. The UDP-glucosyltransferase GT1 and the methyltransferase MT1, located outside the tenS gene cluster, contribute to the stepwise glycosylation and methylation of 15-HT to obtain the glycoside pyridovericin-N-O-(4-O-methyl-beta-D-glucopyranoside) (PMGP). Additional related compounds such as 1-O-methyl-15-HT, (8Z)-1-O-methyl-15-HT, and O-methyltenellin A are also produced but the enzymes involved in their biosynthesis have still to be determined. The polypeptide is Trans-enoyl reductase tenC (Beauveria bassiana (White muscardine disease fungus)).